Reading from the N-terminus, the 213-residue chain is GTP cyclohydrolase 1 (213 aa).

Zn(2+)-binding residues include cysteine 104, histidine 107, and cysteine 175.

It belongs to the GTP cyclohydrolase I family. As to quaternary structure, toroid-shaped homodecamer, composed of two pentamers of five dimers.

It catalyses the reaction GTP + H2O = 7,8-dihydroneopterin 3'-triphosphate + formate + H(+). It participates in cofactor biosynthesis; 7,8-dihydroneopterin triphosphate biosynthesis; 7,8-dihydroneopterin triphosphate from GTP: step 1/1. The polypeptide is GTP cyclohydrolase 1 (Brucella abortus (strain 2308)).